The sequence spans 1816 residues: Kinesin-like protein KIF1B (1816 aa).

Serine 2 bears the N-acetylserine mark. A Kinesin motor domain is found at 5 to 354 (SVKVAVRVRP…LRYADRAKQI (350 aa)). 97-104 (GQTGAGKS) contacts ATP. The tract at residues 270–350 (NINKSLTTLG…TLSTLRYADR (81 aa)) is interaction with KIFBP. Coiled coils occupy residues 365-386 (NAKLVRELKEEVTRLKDLLRAQ) and 470-502 (GEEAIERLKESEKIIAELNETWEEKLRKTEAIR). Positions 556–612 (TRVGQADAERRQDIVLSGAHIKEEHCLFRSERSNTGEVIVTLEPCERSETYVNGKRV) constitute an FHA domain. Phosphothreonine is present on residues threonine 647 and threonine 652. Coiled coils occupy residues 668–737 (EKQG…EEEV) and 841–869 (SLDKLKQRLDLMREMYDRAGEVASSAQDD). Phosphoserine is present on residues serine 1054, serine 1057, serine 1416, serine 1454, and serine 1487. The tract at residues 1522–1571 (VPKSLSDSLSPSLSSGTLSTSTSISSQISTTTFESAITPSESSGYDSADV) is disordered. The span at 1525–1553 (SLSDSLSPSLSSGTLSTSTSISSQISTTT) shows a compositional bias: low complexity. The span at 1554 to 1566 (FESAITPSESSGY) shows a compositional bias: polar residues. Residues serine 1573, serine 1603, serine 1610, and serine 1613 each carry the phosphoserine modification. The segment covering 1620 to 1637 (SVSSFSSSTLTPSSTCPS) has biased composition (low complexity). A disordered region spans residues 1620–1659 (SVSSFSSSTLTPSSTCPSLVDSRSSSMDQKTPEANSRASS). Positions 1640–1659 (DSRSSSMDQKTPEANSRASS) are enriched in polar residues. A PH domain is found at 1702–1799 (VSKKGYLHFK…WLYAFNPLLA (98 aa)).

This sequence belongs to the TRAFAC class myosin-kinesin ATPase superfamily. Kinesin family. Unc-104 subfamily. In terms of assembly, monomer. Interacts with KIFBP; positively regulates KIF1B microtubule motor activity. Interacts (via C-terminus end of the kinesin-motor domain) with CHP1; the interaction occurs in a calcium-dependent manner. Interacts with MADD (via death domain); links this isoform to Rab3-carrying vesicles in anterograde synaptic vesicle transport. In terms of tissue distribution, expressed in the brain (at protein level).

The protein localises to the cytoplasm. It is found in the cytoskeleton. Its subcellular location is the cytoplasmic vesicle. It localises to the secretory vesicle. The protein resides in the synaptic vesicle membrane. The protein localises to the mitochondrion. The enzyme catalyses ATP + H2O + a kinesin associated with a microtubule at position (n) = ADP + phosphate a kinesin associated with a microtubule at position (n+1, toward the plus end).. Has a plus-end-directed microtubule motor activity and functions as a motor for transport of vesicles and organelles along microtubules. Its function is as follows. Has a plus-end-directed microtubule motor activity and functions as a motor for anterograde synaptic vesicle transport along axonal microtubules from the cell body to the presynapse in neuronal cells. Functions as a downstream effector in a developmental apoptotic pathway that is activated when nerve growth factor (NGF) becomes limiting for neuronal progenitor cells. Functionally, has a plus-end-directed microtubule motor activity and functions as a motor for anterograde transport of mitochondria. The protein is Kinesin-like protein KIF1B of Mus musculus (Mouse).